The following is a 139-amino-acid chain: Large ribosomal subunit protein uL16 (139 aa).

Residues 74 to 94 (LTKKPAETRQGSGKGSPESWV) form a disordered region.

It belongs to the universal ribosomal protein uL16 family. In terms of assembly, part of the 50S ribosomal subunit.

In terms of biological role, binds 23S rRNA and is also seen to make contacts with the A and possibly P site tRNAs. The polypeptide is Large ribosomal subunit protein uL16 (Saccharopolyspora erythraea (strain ATCC 11635 / DSM 40517 / JCM 4748 / NBRC 13426 / NCIMB 8594 / NRRL 2338)).